The chain runs to 312 residues: Porphobilinogen deaminase (312 aa).

Cysteine 241 is modified (S-(dipyrrolylmethanemethyl)cysteine).

It belongs to the HMBS family. Monomer. Dipyrromethane serves as cofactor.

The enzyme catalyses 4 porphobilinogen + H2O = hydroxymethylbilane + 4 NH4(+). It functions in the pathway porphyrin-containing compound metabolism; protoporphyrin-IX biosynthesis; coproporphyrinogen-III from 5-aminolevulinate: step 2/4. The protein operates within porphyrin-containing compound metabolism; chlorophyll biosynthesis. Functionally, tetrapolymerization of the monopyrrole PBG into the hydroxymethylbilane pre-uroporphyrinogen in several discrete steps. This Prosthecochloris aestuarii (strain DSM 271 / SK 413) protein is Porphobilinogen deaminase.